The chain runs to 330 residues: D-alanine--D-alanine ligase (330 aa).

In terms of domain architecture, ATP-grasp spans 120–326; the sequence is KLWLSALDIP…FKQFLEGIIR (207 aa). 150–205 serves as a coordination point for ATP; it reads AFRNWGAVFVKAASQGSSVGCYKVTDAAKLSEAVNAAFGYSDQVLVEKAVRPRELE. Mg(2+)-binding residues include Asp-280, Glu-293, and Asn-295.

It belongs to the D-alanine--D-alanine ligase family. The cofactor is Mg(2+). Mn(2+) serves as cofactor.

Its subcellular location is the cytoplasm. The enzyme catalyses 2 D-alanine + ATP = D-alanyl-D-alanine + ADP + phosphate + H(+). Its pathway is cell wall biogenesis; peptidoglycan biosynthesis. Its function is as follows. Cell wall formation. This Tolumonas auensis (strain DSM 9187 / NBRC 110442 / TA 4) protein is D-alanine--D-alanine ligase.